The sequence spans 79 residues: ATP synthase subunit c (79 aa).

2 helical membrane passes run 11 to 31 (IAVAVMIGLAAIGAAVGIGIL) and 59 to 79 (LVDAIPMIAVGLGLYMLFAVI).

The protein belongs to the ATPase C chain family. F-type ATPases have 2 components, F(1) - the catalytic core - and F(0) - the membrane proton channel. F(1) has five subunits: alpha(3), beta(3), gamma(1), delta(1), epsilon(1). F(0) has three main subunits: a(1), b(2) and c(10-14). The alpha and beta chains form an alternating ring which encloses part of the gamma chain. F(1) is attached to F(0) by a central stalk formed by the gamma and epsilon chains, while a peripheral stalk is formed by the delta and b chains.

It is found in the cell membrane. Functionally, f(1)F(0) ATP synthase produces ATP from ADP in the presence of a proton or sodium gradient. F-type ATPases consist of two structural domains, F(1) containing the extramembraneous catalytic core and F(0) containing the membrane proton channel, linked together by a central stalk and a peripheral stalk. During catalysis, ATP synthesis in the catalytic domain of F(1) is coupled via a rotary mechanism of the central stalk subunits to proton translocation. Key component of the F(0) channel; it plays a direct role in translocation across the membrane. A homomeric c-ring of between 10-14 subunits forms the central stalk rotor element with the F(1) delta and epsilon subunits. The protein is ATP synthase subunit c of Buchnera aphidicola subsp. Baizongia pistaciae (strain Bp).